The sequence spans 436 residues: Calcium/calmodulin-regulated receptor-like kinase 2 (436 aa).

Residues 7–34 (LVVIGISVGLALGLLLALLLFFAIKWYY) traverse the membrane as a helical segment. The disordered stretch occupies residues 65-88 (DRANTESSQPPENGAPTQHQPWWN). Positions 69–88 (TESSQPPENGAPTQHQPWWN) are enriched in polar residues. The region spanning 114-375 (QNFTTVLGQG…PSIGEVTQFI (262 aa)) is the Protein kinase domain. ATP contacts are provided by residues 120-128 (LGQGSFGPV) and K142. A Phosphotyrosine modification is found at Y187. D239 serves as the catalytic Proton acceptor. T276 is subject to Phosphothreonine. Y284 carries the post-translational modification Phosphotyrosine.

This sequence belongs to the protein kinase superfamily. Ser/Thr protein kinase family.

It localises to the cell membrane. The enzyme catalyses L-seryl-[protein] + ATP = O-phospho-L-seryl-[protein] + ADP + H(+). The catalysed reaction is L-threonyl-[protein] + ATP = O-phospho-L-threonyl-[protein] + ADP + H(+). This chain is Calcium/calmodulin-regulated receptor-like kinase 2, found in Arabidopsis thaliana (Mouse-ear cress).